The following is a 729-amino-acid chain: Alpha-galactosidase AgaA (729 aa).

Substrate contacts are provided by residues aspartate 53, tryptophan 199, 366 to 367, arginine 443, 476 to 480, cysteine 526, and aspartate 548; these read DD and KWDMN. Aspartate 478 functions as the Nucleophile in the catalytic mechanism. Aspartate 548 functions as the Proton donor in the catalytic mechanism.

This sequence belongs to the glycosyl hydrolase 36 family. As to quaternary structure, homotetramer.

The catalysed reaction is Hydrolysis of terminal, non-reducing alpha-D-galactose residues in alpha-D-galactosides, including galactose oligosaccharides, galactomannans and galactolipids.. With respect to regulation, not inhibited by D-galactose or sucrose. Inhibited by pharmaceutical drug 1-deoxygalactonojirimycin. Hydrolyzes the short-chain alpha-galactosaccharides raffinose and stachyose. The polypeptide is Alpha-galactosidase AgaA (Geobacillus stearothermophilus (Bacillus stearothermophilus)).